The following is a 117-amino-acid chain: Hydrogenase maturation factor HypA (117 aa).

Residue His-2 coordinates Ni(2+). Zn(2+) is bound by residues Cys-73, Cys-76, Cys-89, and Cys-92.

This sequence belongs to the HypA/HybF family.

Its function is as follows. Involved in the maturation of [NiFe] hydrogenases. Required for nickel insertion into the metal center of the hydrogenase. This Pelodictyon phaeoclathratiforme (strain DSM 5477 / BU-1) protein is Hydrogenase maturation factor HypA.